A 215-amino-acid chain; its full sequence is Octanoyltransferase (215 aa).

In terms of domain architecture, BPL/LPL catalytic spans 31-206; it reads PDSQDEIWLV…QLVKHLDYAE (176 aa). Substrate is bound by residues 70-77, 137-139, and 150-152; these read RGGQVTYH, SLG, and GLA. The active-site Acyl-thioester intermediate is cysteine 168.

Belongs to the LipB family.

The protein localises to the cytoplasm. It catalyses the reaction octanoyl-[ACP] + L-lysyl-[protein] = N(6)-octanoyl-L-lysyl-[protein] + holo-[ACP] + H(+). The protein operates within protein modification; protein lipoylation via endogenous pathway; protein N(6)-(lipoyl)lysine from octanoyl-[acyl-carrier-protein]: step 1/2. Functionally, catalyzes the transfer of endogenously produced octanoic acid from octanoyl-acyl-carrier-protein onto the lipoyl domains of lipoate-dependent enzymes. Lipoyl-ACP can also act as a substrate although octanoyl-ACP is likely to be the physiological substrate. This is Octanoyltransferase from Pseudomonas putida (strain W619).